Consider the following 346-residue polypeptide: Mannonate dehydratase (346 aa).

This sequence belongs to the mannonate dehydratase family. Fe(2+) serves as cofactor. It depends on Mn(2+) as a cofactor.

It catalyses the reaction D-mannonate = 2-dehydro-3-deoxy-D-gluconate + H2O. The protein operates within carbohydrate metabolism; pentose and glucuronate interconversion. Functionally, catalyzes the dehydration of D-mannonate. The protein is Mannonate dehydratase of Cupriavidus taiwanensis (strain DSM 17343 / BCRC 17206 / CCUG 44338 / CIP 107171 / LMG 19424 / R1) (Ralstonia taiwanensis (strain LMG 19424)).